The chain runs to 351 residues: Divinyl chlorophyll a/b light-harvesting protein PcbA (351 aa).

A run of 6 helical transmembrane segments spans residues 27–47, 64–84, 89–109, 202–222, 242–262, and 305–325; these read FIAAHAAHTGLIAFWAGAFTL, LIALPHLATLGIGFDEAGTFV, VTAIAIVHLVLSMVYGAGGLL, VMGGHAFLAFFMITGGAFHIA, AILSWSLAGIGWMAIVAAFWC, and LTNVHYFLGFFYIQGHLWHAL.

The protein belongs to the PsbB/PsbC family. IsiA/Pcb subfamily. As to quaternary structure, the antenna complex consists of divinyl chlorophylls (a and b) and divinyl chlorophyll a/b binding proteins and binds more divinyl chlorophyll b than does the antenna complex from high-light-adapted Prochlorococcus. Divinyl chlorophyll a serves as cofactor. Divinyl chlorophyll b is required as a cofactor.

It localises to the cellular thylakoid membrane. The antenna complex functions as a light receptor, it captures and delivers excitation energy to photosystems II and I. The Prochlorales pcb genes are not related to higher plant LHCs. The protein is Divinyl chlorophyll a/b light-harvesting protein PcbA (pcbA) of Prochlorococcus marinus (strain SARG / CCMP1375 / SS120).